A 310-amino-acid chain; its full sequence is HPr kinase/phosphorylase (310 aa).

Active-site residues include histidine 138 and lysine 159. 153 to 160 (GSSGVGKS) is an ATP binding site. Serine 160 is a binding site for Mg(2+). The active-site Proton acceptor; for phosphorylation activity. Proton donor; for dephosphorylation activity is aspartate 177. Residues 201-210 (LEIRGLGIIN) are important for the catalytic mechanism of both phosphorylation and dephosphorylation. Glutamate 202 lines the Mg(2+) pocket. Residue arginine 243 is part of the active site. The segment at 264–269 (PVRPGR) is important for the catalytic mechanism of dephosphorylation.

Belongs to the HPrK/P family. In terms of assembly, homohexamer. Mg(2+) serves as cofactor.

It carries out the reaction [HPr protein]-L-serine + ATP = [HPr protein]-O-phospho-L-serine + ADP + H(+). The enzyme catalyses [HPr protein]-O-phospho-L-serine + phosphate + H(+) = [HPr protein]-L-serine + diphosphate. Catalyzes the ATP- as well as the pyrophosphate-dependent phosphorylation of a specific serine residue in HPr, a phosphocarrier protein of the phosphoenolpyruvate-dependent sugar phosphotransferase system (PTS). HprK/P also catalyzes the pyrophosphate-producing, inorganic phosphate-dependent dephosphorylation (phosphorolysis) of seryl-phosphorylated HPr (P-Ser-HPr). The two antagonistic activities of HprK/P are regulated by several intracellular metabolites, which change their concentration in response to the absence or presence of rapidly metabolisable carbon sources (glucose, fructose, etc.) in the growth medium. Also phosphorylates/dephosphorylates the HPr-like catabolite repression protein crh on a specific serine residue. Therefore, by controlling the phosphorylation state of HPr and crh, HPrK/P is a sensor enzyme that plays a major role in the regulation of carbon metabolism and sugar transport: it mediates carbon catabolite repression (CCR), and regulates PTS-catalyzed carbohydrate uptake and inducer exclusion. The protein is HPr kinase/phosphorylase (hprK) of Halalkalibacterium halodurans (strain ATCC BAA-125 / DSM 18197 / FERM 7344 / JCM 9153 / C-125) (Bacillus halodurans).